Reading from the N-terminus, the 115-residue chain is UPF0235 protein CTA_0423 (115 aa).

This sequence belongs to the UPF0235 family.

The sequence is that of UPF0235 protein CTA_0423 from Chlamydia trachomatis serovar A (strain ATCC VR-571B / DSM 19440 / HAR-13).